The following is a 63-amino-acid chain: Large ribosomal subunit protein uL30 (63 aa).

Belongs to the universal ribosomal protein uL30 family. As to quaternary structure, part of the 50S ribosomal subunit.

This is Large ribosomal subunit protein uL30 from Chlorobium chlorochromatii (strain CaD3).